The sequence spans 469 residues: Glutamate--tRNA ligase 2 (469 aa).

Positions 8–18 match the 'HIGH' region motif; the sequence is PSPTGFLHVGG. Residues 250-254 carry the 'KMSKS' region motif; sequence KLSKR. An ATP-binding site is contributed by K253.

The protein belongs to the class-I aminoacyl-tRNA synthetase family. Glutamate--tRNA ligase type 1 subfamily. Monomer.

It localises to the cytoplasm. It catalyses the reaction tRNA(Glu) + L-glutamate + ATP = L-glutamyl-tRNA(Glu) + AMP + diphosphate. Its function is as follows. Catalyzes the attachment of glutamate to tRNA(Glu) in a two-step reaction: glutamate is first activated by ATP to form Glu-AMP and then transferred to the acceptor end of tRNA(Glu). This Thermotoga sp. (strain RQ2) protein is Glutamate--tRNA ligase 2.